A 370-amino-acid chain; its full sequence is Dual-specificity RNA methyltransferase RlmN (370 aa).

The active-site Proton acceptor is the glutamate 93. The Radical SAM core domain occupies 99–337; the sequence is EEGRGTLCVS…VTTVRKTRGD (239 aa). Residues cysteine 106 and cysteine 343 are joined by a disulfide bond. 3 residues coordinate [4Fe-4S] cluster: cysteine 113, cysteine 117, and cysteine 120. Residues 167 to 168, serine 199, 221 to 223, and asparagine 300 contribute to the S-adenosyl-L-methionine site; these read GE and SLH. Cysteine 343 (S-methylcysteine intermediate) is an active-site residue.

This sequence belongs to the radical SAM superfamily. RlmN family. It depends on [4Fe-4S] cluster as a cofactor.

It is found in the cytoplasm. It catalyses the reaction adenosine(2503) in 23S rRNA + 2 reduced [2Fe-2S]-[ferredoxin] + 2 S-adenosyl-L-methionine = 2-methyladenosine(2503) in 23S rRNA + 5'-deoxyadenosine + L-methionine + 2 oxidized [2Fe-2S]-[ferredoxin] + S-adenosyl-L-homocysteine. The enzyme catalyses adenosine(37) in tRNA + 2 reduced [2Fe-2S]-[ferredoxin] + 2 S-adenosyl-L-methionine = 2-methyladenosine(37) in tRNA + 5'-deoxyadenosine + L-methionine + 2 oxidized [2Fe-2S]-[ferredoxin] + S-adenosyl-L-homocysteine. Functionally, specifically methylates position 2 of adenine 2503 in 23S rRNA and position 2 of adenine 37 in tRNAs. m2A2503 modification seems to play a crucial role in the proofreading step occurring at the peptidyl transferase center and thus would serve to optimize ribosomal fidelity. This chain is Dual-specificity RNA methyltransferase RlmN, found in Francisella tularensis subsp. novicida (strain U112).